The sequence spans 623 residues: DNA-directed RNA polymerase subunit beta' (623 aa).

Residues Cys70, Cys72, Cys85, and Cys88 each coordinate Zn(2+). Mg(2+) is bound by residues Asp466, Asp468, and Asp470.

The protein belongs to the RNA polymerase beta' chain family. RpoC1 subfamily. In terms of assembly, in plastids the minimal PEP RNA polymerase catalytic core is composed of four subunits: alpha, beta, beta', and beta''. When a (nuclear-encoded) sigma factor is associated with the core the holoenzyme is formed, which can initiate transcription. Mg(2+) serves as cofactor. The cofactor is Zn(2+).

Its subcellular location is the plastid. It localises to the chloroplast. The catalysed reaction is RNA(n) + a ribonucleoside 5'-triphosphate = RNA(n+1) + diphosphate. DNA-dependent RNA polymerase catalyzes the transcription of DNA into RNA using the four ribonucleoside triphosphates as substrates. The polypeptide is DNA-directed RNA polymerase subunit beta' (Guillardia theta (Cryptophyte)).